The chain runs to 141 residues: Hemoglobin subunit alpha (141 aa).

The Globin domain maps to 1-141 (VLSPEDKNHV…VSTVLTSKYR (141 aa)). Serine 3 carries the post-translational modification Phosphoserine. Residue lysine 7 is modified to N6-succinyllysine. Lysine 16 is modified (N6-acetyllysine; alternate). Position 16 is an N6-succinyllysine; alternate (lysine 16). A Phosphotyrosine modification is found at tyrosine 24. Phosphoserine is present on serine 35. Lysine 40 bears the N6-succinyllysine mark. Serine 49 is modified (phosphoserine). Histidine 58 contacts O2. Histidine 87 lines the heme b pocket. The residue at position 102 (serine 102) is a Phosphoserine. Residue threonine 108 is modified to Phosphothreonine. Phosphoserine is present on residues serine 124 and serine 131. Residues threonine 134 and threonine 137 each carry the phosphothreonine modification. Phosphoserine is present on serine 138.

This sequence belongs to the globin family. As to quaternary structure, heterotetramer of two alpha chains and two beta chains. In terms of tissue distribution, red blood cells.

Involved in oxygen transport from the lung to the various peripheral tissues. In terms of biological role, hemopressin acts as an antagonist peptide of the cannabinoid receptor CNR1. Hemopressin-binding efficiently blocks cannabinoid receptor CNR1 and subsequent signaling. The polypeptide is Hemoglobin subunit alpha (HBA) (Spalax ehrenbergi (Middle East blind mole rat)).